The primary structure comprises 470 residues: Solvent efflux pump outer membrane protein SrpC (470 aa).

The N-terminal stretch at 1–16 is a signal peptide; the sequence is MKFKSLPMFALLMLGG. Cys17 carries the N-palmitoyl cysteine lipid modification. Cys17 carries the S-diacylglycerol cysteine lipid modification. Positions 104-123 are disordered; sequence LDGQASGNRTRLPDDLSPTG.

It belongs to the outer membrane factor (OMF) (TC 1.B.17) family.

Its subcellular location is the cell outer membrane. Functionally, the outer membrane component of an organic solvent efflux pump. Involved in export of a number of low log POW compounds including hexane (log POW 3.5), toluene (log POW 2.5) and dimethylphthalate (log POW 2.3). The solvent resistance phenotype has been postulated to depend on the operon expression level. This chain is Solvent efflux pump outer membrane protein SrpC (srpC), found in Pseudomonas putida (Arthrobacter siderocapsulatus).